A 329-amino-acid polypeptide reads, in one-letter code: Adenylate isopentenyltransferase 7, mitochondrial (329 aa).

The N-terminal 40 residues, 1-40, are a transit peptide targeting the mitochondrion; the sequence is MKFSISSLKQVQPILCFKNKLSKVNVNSFLHPKEKVIFVM. 41–48 contacts ATP; that stretch reads GATGSGKS.

The protein belongs to the IPP transferase family. As to expression, expressed in both the vascular stele and the phloem companion cells of the root, in endodermis of the root elongation zone, trichomes on young leaves, and some pollen tubes.

It is found in the mitochondrion. It carries out the reaction dimethylallyl diphosphate + ADP = N(6)-(dimethylallyl)adenosine 5'-diphosphate + diphosphate. The catalysed reaction is dimethylallyl diphosphate + ATP = N(6)-(dimethylallyl)adenosine 5'-triphosphate + diphosphate. Its function is as follows. Involved in cytokinin biosynthesis. Catalyzes the transfer of an isopentenyl group from dimethylallyl diphosphate (DMAPP) to ATP and ADP. The sequence is that of Adenylate isopentenyltransferase 7, mitochondrial (IPT7) from Arabidopsis thaliana (Mouse-ear cress).